A 78-amino-acid chain; its full sequence is Large ribosomal subunit protein bL28 (78 aa).

Belongs to the bacterial ribosomal protein bL28 family.

This is Large ribosomal subunit protein bL28 from Legionella pneumophila (strain Paris).